A 139-amino-acid chain; its full sequence is Superoxide dismutase [Cu-Zn] (139 aa).

Cysteine 6 carries the S-palmitoyl cysteine lipid modification. Residues histidine 47 and histidine 49 each contribute to the Cu cation site. 3 residues coordinate Zn(2+): histidine 72, histidine 81, and aspartate 84. Histidine 114 is a Cu cation binding site. Basic and acidic residues predominate over residues 118–129 (DDLGKGGNDESL). Residues 118–139 (DDLGKGGNDESLKTGNAGGRMA) form a disordered region.

It belongs to the Cu-Zn superoxide dismutase family. As to quaternary structure, homodimer. It depends on Cu cation as a cofactor. Zn(2+) is required as a cofactor.

It is found in the cytoplasm. It localises to the nucleus. It carries out the reaction 2 superoxide + 2 H(+) = H2O2 + O2. Functionally, destroys radicals which are normally produced within the cells and which are toxic to biological systems. This chain is Superoxide dismutase [Cu-Zn] (sod1), found in Lampanyctus crocodilus (Jewel lanternfish).